We begin with the raw amino-acid sequence, 65 residues long: Period circadian protein (65 aa).

The tract at residues 1-65 is disordered; sequence EGSGGSGSSG…VTLTESLLNK (65 aa). Residues 18–28 are compositionally biased toward polar residues; it reads VRMSSVTNTSN. A compositionally biased stretch (low complexity) spans 29-38; it reads AGTGTSAGDN. Positions 56–65 are enriched in polar residues; it reads VTLTESLLNK.

In terms of assembly, forms a heterodimer with timeless (TIM); the complex then translocates into the nucleus. In terms of processing, phosphorylated with a circadian rhythmicity, probably by the double-time protein (dbt). Phosphorylation could be implicated in the stability of per monomer and in the formation of heterodimer per-tim.

It is found in the nucleus. The protein localises to the cytoplasm. Its subcellular location is the perinuclear region. Functionally, essential for biological clock functions. Determines the period length of circadian and ultradian rhythms; an increase in PER dosage leads to shortened circadian rhythms and a decrease leads to lengthened circadian rhythms. Essential for the circadian rhythmicity of locomotor activity, eclosion behavior, and for the rhythmic component of the male courtship song that originates in the thoracic nervous system. The biological cycle depends on the rhythmic formation and nuclear localization of the TIM-PER complex. Light induces the degradation of TIM, which promotes elimination of PER. Nuclear activity of the heterodimer coordinatively regulates PER and TIM transcription through a negative feedback loop. Behaves as a negative element in circadian transcriptional loop. Does not appear to bind DNA, suggesting indirect transcriptional inhibition. This is Period circadian protein (per) from Drosophila mojavensis (Fruit fly).